The chain runs to 450 residues: Signal recognition particle 54 kDa protein (450 aa).

GTP contacts are provided by residues 107–114 (GIQGSGKT), 188–192 (DTAGR), and 247–250 (TKLD).

The protein belongs to the GTP-binding SRP family. SRP54 subfamily. As to quaternary structure, part of the signal recognition particle protein translocation system, which is composed of SRP and FtsY. Archaeal SRP consists of a 7S RNA molecule of 300 nucleotides and two protein subunits: SRP54 and SRP19.

Its subcellular location is the cytoplasm. The enzyme catalyses GTP + H2O = GDP + phosphate + H(+). In terms of biological role, involved in targeting and insertion of nascent membrane proteins into the cytoplasmic membrane. Binds to the hydrophobic signal sequence of the ribosome-nascent chain (RNC) as it emerges from the ribosomes. The SRP-RNC complex is then targeted to the cytoplasmic membrane where it interacts with the SRP receptor FtsY. The protein is Signal recognition particle 54 kDa protein of Methanococcus vannielii (strain ATCC 35089 / DSM 1224 / JCM 13029 / OCM 148 / SB).